The sequence spans 349 residues: Phosphoribosylformylglycinamidine cyclo-ligase (349 aa).

This sequence belongs to the AIR synthase family.

The protein localises to the cytoplasm. The enzyme catalyses 2-formamido-N(1)-(5-O-phospho-beta-D-ribosyl)acetamidine + ATP = 5-amino-1-(5-phospho-beta-D-ribosyl)imidazole + ADP + phosphate + H(+). It functions in the pathway purine metabolism; IMP biosynthesis via de novo pathway; 5-amino-1-(5-phospho-D-ribosyl)imidazole from N(2)-formyl-N(1)-(5-phospho-D-ribosyl)glycinamide: step 2/2. The protein is Phosphoribosylformylglycinamidine cyclo-ligase of Methanococcus vannielii (strain ATCC 35089 / DSM 1224 / JCM 13029 / OCM 148 / SB).